The sequence spans 373 residues: Putative protein YfkA (373 aa).

Residues 26 to 256 (YGDMQLTNVE…DIRDENTWML (231 aa)) form the Radical SAM core domain. [4Fe-4S] cluster contacts are provided by Cys42, Cys46, and Cys49.

It belongs to the radical SAM superfamily. [4Fe-4S] cluster is required as a cofactor.

The polypeptide is Putative protein YfkA (yfkA) (Bacillus subtilis (strain 168)).